A 382-amino-acid polypeptide reads, in one-letter code: PPE family protein PPE44 (382 aa).

The protein belongs to the mycobacterial PPE family.

The protein localises to the secreted. It is found in the cell wall. The protein resides in the cell surface. Functionally, virulence factor that modulates host innate immune response. This Mycobacterium tuberculosis (strain CDC 1551 / Oshkosh) protein is PPE family protein PPE44.